The following is a 470-amino-acid chain: Uronate isomerase (470 aa).

The protein belongs to the metallo-dependent hydrolases superfamily. Uronate isomerase family.

The enzyme catalyses D-glucuronate = D-fructuronate. It carries out the reaction aldehydo-D-galacturonate = keto-D-tagaturonate. The protein operates within carbohydrate metabolism; pentose and glucuronate interconversion. The polypeptide is Uronate isomerase (Cutibacterium acnes (strain DSM 16379 / KPA171202) (Propionibacterium acnes)).